The chain runs to 359 residues: sn-1 acyl-lipid omega-3 desaturase (ferredoxin) (359 aa).

Residues 1–15 show a composition bias toward polar residues; sequence MQLDTISFNNPLNSE. The disordered stretch occupies residues 1-20; sequence MQLDTISFNNPLNSETSEDT. The next 2 helical transmembrane spans lie at 47 to 67 and 70 to 90; these read LFYFFRDILIIGLLYAVASYL and WLFFPIFWLMQGTMFWALFVV. Residues 92–96 carry the Histidine box-1 motif; it reads HDCGH. The Histidine box-2 motif lies at 128 to 132; the sequence is HRTHH. 2 helical membrane passes run 207 to 227 and 228 to 248; these read VLLIGMVGLLGFLTYQWGWMW and LLKYYAVPYLVFIVWLDLVTF. A Histidine box-3 motif is present at residues 294 to 298; it reads HHIFL.

The protein belongs to the fatty acid desaturase type 2 family. Fe(2+) is required as a cofactor.

Its subcellular location is the membrane. It carries out the reaction a 1-[(9Z,12Z)-octadecdienoyl]-2-acyl-glycerolipid + 2 reduced [2Fe-2S]-[ferredoxin] + O2 + 2 H(+) = a 1-[(9Z,12Z,15Z)-octadectrienoyl]-2-acyl-glycerolipid + 2 oxidized [2Fe-2S]-[ferredoxin] + 2 H2O. The catalysed reaction is a 1-[(6Z,9Z,12Z)-octadectrienoyl]-2-acyl-glycerolipid + 2 reduced [2Fe-2S]-[ferredoxin] + O2 + 2 H(+) = a 1-[(6Z,9Z,12Z,15Z)-octadectetraenoyl]-2-acyl-glycerolipid + 2 oxidized [2Fe-2S]-[ferredoxin] + 2 H2O. It participates in lipid metabolism; polyunsaturated fatty acid biosynthesis. In terms of biological role, desaturase involved in fatty acid biosynthesis. Introduces a double bond at carbon 15 of linoleoyl and gamma-linolenoyl groups attached to the sn-1 position of the glycerol moiety of membrane glycerolipids. The protein is sn-1 acyl-lipid omega-3 desaturase (ferredoxin) of Nostoc sp. (strain 36).